The chain runs to 340 residues: N-acetyl-gamma-glutamyl-phosphate reductase (340 aa).

Cys146 is an active-site residue.

Belongs to the NAGSA dehydrogenase family. Type 1 subfamily.

It is found in the cytoplasm. It carries out the reaction N-acetyl-L-glutamate 5-semialdehyde + phosphate + NADP(+) = N-acetyl-L-glutamyl 5-phosphate + NADPH + H(+). It functions in the pathway amino-acid biosynthesis; L-arginine biosynthesis; N(2)-acetyl-L-ornithine from L-glutamate: step 3/4. Its function is as follows. Catalyzes the NADPH-dependent reduction of N-acetyl-5-glutamyl phosphate to yield N-acetyl-L-glutamate 5-semialdehyde. The protein is N-acetyl-gamma-glutamyl-phosphate reductase of Rubrobacter xylanophilus (strain DSM 9941 / JCM 11954 / NBRC 16129 / PRD-1).